The sequence spans 579 residues: Fatty-acid amide hydrolase 1 (579 aa).

A helical membrane pass occupies residues 9 to 29; the sequence is AFSGPSGVALACCLVAAALAL. The Cytoplasmic segment spans residues 30–403; the sequence is RWSSRRMARG…GDYVDSCLGD (374 aa). The Charge relay system role is filled by lysine 142. Substrate contacts are provided by residues methionine 191, serine 217, and 238 to 241; that span reads IGGS. The active-site Charge relay system is the serine 217. Catalysis depends on serine 241, which acts as the Acyl-ester intermediate. Serine 241 is subject to Phosphoserine. Residues 404 to 433 lie within the membrane without spanning it; sequence LISILRLPKWLKGLLAFMLRPLLPRLAGFL. Residues 434–579 are Cytoplasmic-facing; sequence SSLRPRSAGK…RLMAPGRQPS (146 aa).

The protein belongs to the amidase family. As to quaternary structure, homodimer.

The protein resides in the endoplasmic reticulum membrane. Its subcellular location is the golgi apparatus membrane. The catalysed reaction is N-(5Z,8Z,11Z,14Z-eicosatetraenoyl)-ethanolamine + H2O = ethanolamine + (5Z,8Z,11Z,14Z)-eicosatetraenoate. The enzyme catalyses (9Z)-octadecenamide + H2O = (9Z)-octadecenoate + NH4(+). It carries out the reaction 2-(5Z,8Z,11Z,14Z-eicosatetraenoyl)-glycerol + H2O = glycerol + (5Z,8Z,11Z,14Z)-eicosatetraenoate + H(+). It catalyses the reaction 1-O-methyl-(5Z,8Z,11Z,14Z)-eicosatetraenoate + H2O = methanol + (5Z,8Z,11Z,14Z)-eicosatetraenoate + H(+). The catalysed reaction is (9Z,12Z,15Z)-octadecatrienamide + H2O = (9Z,12Z,15Z)-octadecatrienoate + NH4(+). The enzyme catalyses (5Z,8Z,11Z,14Z)-eicosatetraenamide + H2O = (5Z,8Z,11Z,14Z)-eicosatetraenoate + NH4(+). It carries out the reaction (6Z)-octadecenamide + H2O = (6Z)-octadecenoate + NH4(+). It catalyses the reaction (15Z)-tetracosenamide + H2O = (15Z)-tetracosenoate + NH4(+). The catalysed reaction is (8Z,11Z,14Z)-eicosatrienamide + H2O = (8Z,11Z,14Z)-eicosatrienoate + NH4(+). The enzyme catalyses (11Z,14Z,17Z)-eicosatrienamide + H2O = (11Z,14Z,17Z)-eicosatrienoate + NH4(+). It carries out the reaction (11Z,14Z)-eicosadienamide + H2O = (11Z,14Z)-eicosadienoate + NH4(+). It catalyses the reaction (9Z,12Z)-octadecadienamide + H2O = (9Z,12Z)-octadecadienoate + NH4(+). The catalysed reaction is tetradecamide + H2O = tetradecanoate + NH4(+). The enzyme catalyses N-(9Z-octadecenoyl) ethanolamine + H2O = ethanolamine + (9Z)-octadecenoate. It carries out the reaction N-(9Z-octadecenoyl)-taurine + H2O = taurine + (9Z)-octadecenoate. It catalyses the reaction (11Z)-eicosenamide + H2O = (11Z)-eicosenoate + NH4(+). The catalysed reaction is N-(9Z-hexadecenoyl) ethanolamine + H2O = (9Z)-hexadecenoate + ethanolamine. The enzyme catalyses N-octadecanoyl ethanolamine + H2O = octadecanoate + ethanolamine. It carries out the reaction N-docosanoyl-ethanolamine + H2O = docosanoate + ethanolamine. It catalyses the reaction N-tetracosanoyl-taurine + H2O = tetracosanoate + taurine. The catalysed reaction is N-(15Z-tetracosenoyl)-ethanolamine + H2O = (15Z)-tetracosenoate + ethanolamine. The enzyme catalyses N-docosanoyl-taurine + H2O = docosanoate + taurine. It carries out the reaction N-(15Z-tetracosenoyl)-taurine + H2O = (15Z)-tetracosenoate + taurine. It catalyses the reaction N-tricosanoyl-taurine + H2O = tricosanoate + taurine. The catalysed reaction is (9Z)-octadecenoate + glycine = N-(9Z-octadecenoyl)glycine + H2O. The enzyme catalyses N-(5Z,8Z,11Z,14Z)-eicosatetraenoyl-glycine + H2O = (5Z,8Z,11Z,14Z)-eicosatetraenoate + glycine. It carries out the reaction N-(5Z,8Z,11Z,14Z-eicosatetraenoyl)-L-serine + H2O = (5Z,8Z,11Z,14Z)-eicosatetraenoate + L-serine. With respect to regulation, inhibited by trifluoromethyl ketone. Functionally, catalyzes the hydrolysis of endogenous amidated lipids like the sleep-inducing lipid oleamide ((9Z)-octadecenamide), the endocannabinoid anandamide (N-(5Z,8Z,11Z,14Z-eicosatetraenoyl)-ethanolamine), as well as other fatty amides, to their corresponding fatty acids, thereby regulating the signaling functions of these molecules. Also catalyzes the hydrolysis of the endocannabinoid 2-arachidonoylglycerol (2-(5Z,8Z,11Z,14Z-eicosatetraenoyl)-glycerol). FAAH cooperates with PM20D1 in the hydrolysis of amino acid-conjugated fatty acids such as N-fatty acyl glycine and N-fatty acyl-L-serine, thereby acting as a physiological regulator of specific subsets of intracellular, but not of extracellular, N-fatty acyl amino acids. This chain is Fatty-acid amide hydrolase 1 (FAAH), found in Sus scrofa (Pig).